A 373-amino-acid chain; its full sequence is tRNA-specific 2-thiouridylase MnmA (373 aa).

ATP is bound by residues glycine 12–serine 19 and methionine 38. Positions asparagine 98 to aspartate 100 are interaction with target base in tRNA. Residue cysteine 103 is the Nucleophile of the active site. A disulfide bridge links cysteine 103 with cysteine 200. Glycine 127 contacts ATP. Residues lysine 150–glutamine 152 form an interaction with tRNA region. Cysteine 200 (cysteine persulfide intermediate) is an active-site residue. The interval arginine 312–tyrosine 313 is interaction with tRNA.

This sequence belongs to the MnmA/TRMU family.

The protein localises to the cytoplasm. It catalyses the reaction S-sulfanyl-L-cysteinyl-[protein] + uridine(34) in tRNA + AH2 + ATP = 2-thiouridine(34) in tRNA + L-cysteinyl-[protein] + A + AMP + diphosphate + H(+). Catalyzes the 2-thiolation of uridine at the wobble position (U34) of tRNA, leading to the formation of s(2)U34. This chain is tRNA-specific 2-thiouridylase MnmA, found in Streptococcus pyogenes serotype M18 (strain MGAS8232).